We begin with the raw amino-acid sequence, 62 residues long: Photosystem II reaction center protein Z (62 aa).

Transmembrane regions (helical) follow at residues 8–28 (AVFALIATSSILLISVPVVFS) and 41–61 (FSGTSLWIGLVFLVGILNSLI).

The protein belongs to the PsbZ family. PSII is composed of 1 copy each of membrane proteins PsbA, PsbB, PsbC, PsbD, PsbE, PsbF, PsbH, PsbI, PsbJ, PsbK, PsbL, PsbM, PsbT, PsbY, PsbZ, Psb30/Ycf12, at least 3 peripheral proteins of the oxygen-evolving complex and a large number of cofactors. It forms dimeric complexes.

The protein resides in the plastid. It is found in the chloroplast thylakoid membrane. May control the interaction of photosystem II (PSII) cores with the light-harvesting antenna, regulates electron flow through the 2 photosystem reaction centers. PSII is a light-driven water plastoquinone oxidoreductase, using light energy to abstract electrons from H(2)O, generating a proton gradient subsequently used for ATP formation. This is Photosystem II reaction center protein Z from Populus alba (White poplar).